The chain runs to 681 residues: Pescadillo homolog (681 aa).

Positions 350–469 constitute a BRCT domain; the sequence is TAGALFAPFT…KLLRPDLYAP (120 aa). The tract at residues 489-681 is disordered; that stretch reads DPRASLAEQE…RRKLEKGAEK (193 aa). The stretch at 491-527 forms a coiled coil; the sequence is RASLAEQEEEGEAEIAAEEEEEDSDEEMEEATDGKKV. Acidic residues predominate over residues 496 to 521; it reads EQEEEGEAEIAAEEEEEDSDEEMEEA. Residues 522-533 are compositionally biased toward basic and acidic residues; that stretch reads TDGKKVDAKAED. 2 stretches are compositionally biased toward acidic residues: residues 534 to 546 and 554 to 586; these read SAEE…DDSV and GTDD…DEEE. A coiled-coil region spans residues 574–681; it reads EEEAASESED…RRKLEKGAEK (108 aa). The segment covering 587–597 has biased composition (basic and acidic residues); the sequence is SARTQHQKELE. Basic residues predominate over residues 617–629; the sequence is KKSSQAKKVASKK. The segment covering 630 to 640 has biased composition (basic and acidic residues); it reads RKEEEELERQK.

It belongs to the pescadillo family. As to quaternary structure, component of the NOP7 complex, composed of erb1, nop7 and ytm1. The complex is held together by erb1, which interacts with nop7 via its N-terminal domain and with ytm1 via a high-affinity interaction between the seven-bladed beta-propeller domains of the 2 proteins. The NOP7 complex associates with the 66S pre-ribosome.

It is found in the nucleus. The protein localises to the nucleolus. It localises to the nucleoplasm. Component of the NOP7 complex, which is required for maturation of the 25S and 5.8S ribosomal RNAs and formation of the 60S ribosome. The chain is Pescadillo homolog (nop7) from Aspergillus oryzae (strain ATCC 42149 / RIB 40) (Yellow koji mold).